The primary structure comprises 327 residues: Biotin synthase (327 aa).

One can recognise a Radical SAM core domain in the interval 42 to 268; sequence NKVQKASLLS…VMPASTVRLS (227 aa). Cys-57, Cys-61, and Cys-64 together coordinate [4Fe-4S] cluster. [2Fe-2S] cluster is bound by residues Cys-102, Cys-134, Cys-194, and Arg-266.

It belongs to the radical SAM superfamily. Biotin synthase family. As to quaternary structure, homodimer. Requires [4Fe-4S] cluster as cofactor. The cofactor is [2Fe-2S] cluster.

It catalyses the reaction (4R,5S)-dethiobiotin + (sulfur carrier)-SH + 2 reduced [2Fe-2S]-[ferredoxin] + 2 S-adenosyl-L-methionine = (sulfur carrier)-H + biotin + 2 5'-deoxyadenosine + 2 L-methionine + 2 oxidized [2Fe-2S]-[ferredoxin]. Its pathway is cofactor biosynthesis; biotin biosynthesis; biotin from 7,8-diaminononanoate: step 2/2. Catalyzes the conversion of dethiobiotin (DTB) to biotin by the insertion of a sulfur atom into dethiobiotin via a radical-based mechanism. This chain is Biotin synthase, found in Rhizobium rhizogenes (strain K84 / ATCC BAA-868) (Agrobacterium radiobacter).